A 275-amino-acid chain; its full sequence is MNTSHYSVLGHAVPYPKAYDPSLLFPISRAVGRAQIGIGVVLPFVGEDRWHAYELSWLDARGKPCVATATFHVPCDSPYLIESKSLKLYLNSFSAEVFNRAEALRLRIAADLSACAGAAVAVEFGLPPVGGGDKEISLDRLNVDIEDYGPPNPDYLSNVAQNLIEEMVEETLTSTLFKSNCPVTGQPDWASVTVRYFGVPIDHEGLLRYFISFRHHAEFHEQCVERIFQDVLQRCSPQCLAVEARYTRRGGLDINPLRTTSEMAWPISVFRDPRQ.

81-83 (IES) serves as a coordination point for substrate. Residue 83–84 (SK) coordinates NADPH. Cys-181 (thioimide intermediate) is an active-site residue. Asp-188 (proton donor) is an active-site residue. Residue 220 to 221 (HE) participates in substrate binding. Position 249-250 (249-250 (RG)) interacts with NADPH.

The protein belongs to the GTP cyclohydrolase I family. QueF type 2 subfamily. In terms of assembly, homodimer.

It localises to the cytoplasm. It catalyses the reaction 7-aminomethyl-7-carbaguanine + 2 NADP(+) = 7-cyano-7-deazaguanine + 2 NADPH + 3 H(+). The protein operates within tRNA modification; tRNA-queuosine biosynthesis. Functionally, catalyzes the NADPH-dependent reduction of 7-cyano-7-deazaguanine (preQ0) to 7-aminomethyl-7-deazaguanine (preQ1). The polypeptide is NADPH-dependent 7-cyano-7-deazaguanine reductase (Xylella fastidiosa (strain 9a5c)).